A 180-amino-acid chain; its full sequence is MPQRLKQVYQDTIVPKLTEQFSYKNPHEVPKVVKITVNRGLGEASQNAKALESSINELSTITGQKPVVTRAKKAIAGFKIRQGMPVGVMVTLRSDRMYAFLDRLINLALPRIRDFRGISAKSFDGRGNYSLGIREQLIFPEIDYDTIDQIRGMDVSIITTAQTDEEGRALLKELGMPFRT.

This sequence belongs to the universal ribosomal protein uL5 family. Part of the 50S ribosomal subunit; part of the 5S rRNA/L5/L18/L25 subcomplex. Contacts the 5S rRNA and the P site tRNA. Forms a bridge to the 30S subunit in the 70S ribosome.

Its function is as follows. This is one of the proteins that bind and probably mediate the attachment of the 5S RNA into the large ribosomal subunit, where it forms part of the central protuberance. In the 70S ribosome it contacts protein S13 of the 30S subunit (bridge B1b), connecting the 2 subunits; this bridge is implicated in subunit movement. Contacts the P site tRNA; the 5S rRNA and some of its associated proteins might help stabilize positioning of ribosome-bound tRNAs. The chain is Large ribosomal subunit protein uL5 from Rippkaea orientalis (strain PCC 8801 / RF-1) (Cyanothece sp. (strain PCC 8801)).